We begin with the raw amino-acid sequence, 1147 residues long: Protein lin-41 (1147 aa).

The disordered stretch occupies residues 1-93; it reads MATIVPCSLE…PPSMIQSPQQ (93 aa). Low complexity predominate over residues 33-47; sequence SGNELSMGGSSSEGD. Residues 48–65 show a composition bias toward basic and acidic residues; that stretch reads SMSHHRGEHSPNHHHQDN. The span at 84–93 shows a compositional bias: low complexity; that stretch reads PPSMIQSPQQ. The RING-type zinc finger occupies 114–155; it reads CSVCSKSSTIGVLPFVCAHKTCQSCYQMTPSSYDRRACKLCG. A B box-type; atypical zinc finger spans residues 366-412; sequence MGPIQCQGCESKISFAYCMQCQEALCIHCVQAHQRVRATKQHAFVEL. Zn(2+) is bound by residues Cys371, Cys374, Cys394, and His398. The stretch at 565 to 618 forms a coiled coil; sequence AFDTHVNALEERRKELLKRVETVKNLKLSVLISQAESLQSKQIDLQQAIQTATK. The stretch at 723-817 is one Filamin repeat; the sequence is ACGDLLSSSI…ISGCPTTMDI (95 aa). 6 NHL repeats span residues 832 to 875, 879 to 922, 926 to 969, 974 to 1017, 1022 to 1065, and 1107 to 1147; these read ILTF…FDKD, ISKF…FDEN, LLKF…FTPQ, RKCG…LSPR, MKVY…FASD, and SAPT…IRVF. The disordered stretch occupies residues 1104–1123; it reads AFSSAPTPLTPSPRQLLDRP.

It belongs to the TRIM/RBCC family.

The protein resides in the cytoplasm. It is found in the P-body. Heterochronic protein which acts downstream of let-7 in temporal patterning. Plays a role in the developmental timing of postembryonic hypodermal seam cell division and fusion events and adult alae production. Represses lin-29 during late larval stages, which prevents terminal differentiation of hypodermal seam cells and promotes their division. Involved in post-transcriptional gene regulation, uses two independent pathways. Has direct and specific RNA-binding activity and, depending on the location (5'UTR or 3'UTR) of the target site, triggers either mRNA decay or repression of translation. Degrades the mRNA of transcription factor dmd-3 to govern the timing and extent of male tail tip morphogenesis. Plays a role in the sexual maturation of the nervous system. This chain is Protein lin-41, found in Caenorhabditis elegans.